The primary structure comprises 657 residues: Pyoverdine export ATP-binding/permease protein PvdT (657 aa).

The region spanning 6–245 (IDLQDIRKSY…ASTNPGALQA (240 aa)) is the ABC transporter domain. 43–50 (GASGSGKS) lines the ATP pocket. 4 consecutive transmembrane segments (helical) span residues 285 to 305 (ALTL…LAVG), 539 to 559 (IAAI…LMTV), 590 to 610 (LSVV…GVLI), and 620 to 640 (LVAI…FGFM).

It belongs to the ABC transporter superfamily. Macrolide exporter (TC 3.A.1.122) family. Part of the tripartite efflux system PvdRT-OpmQ, which is composed of an inner membrane component with both ATPase and permease domains, PvdT, a periplasmic membrane fusion protein, PvdR, and an outer membrane component, OpmQ.

The protein localises to the cell inner membrane. Its function is as follows. Part of the tripartite efflux system PvdRT-OpmQ required for the secretion into the extracellular milieu of the siderophore pyoverdine (PVD), which is involved in iron acquisition. This subunit binds PVD and drives its secretion by hydrolyzing ATP. The system is responsible for export of newly synthesized PVD after the final steps of biosynthesis have taken place in the periplasm. It is also responsible for recycling of PVD after internalization of ferri-PVD into the periplasm by the outer-membrane receptor FpvA and release of iron from PVD, thus making PVD available for new cycles of iron uptake. The protein is Pyoverdine export ATP-binding/permease protein PvdT of Pseudomonas fluorescens (strain Pf0-1).